A 156-amino-acid polypeptide reads, in one-letter code: Small ribosomal subunit protein uS7 (156 aa).

This sequence belongs to the universal ribosomal protein uS7 family. Part of the 30S ribosomal subunit. Contacts proteins S9 and S11.

One of the primary rRNA binding proteins, it binds directly to 16S rRNA where it nucleates assembly of the head domain of the 30S subunit. Is located at the subunit interface close to the decoding center, probably blocks exit of the E-site tRNA. This is Small ribosomal subunit protein uS7 from Klebsiella pneumoniae subsp. pneumoniae (strain ATCC 700721 / MGH 78578).